We begin with the raw amino-acid sequence, 461 residues long: Asparagine--tRNA ligase (461 aa).

This sequence belongs to the class-II aminoacyl-tRNA synthetase family. As to quaternary structure, homodimer.

It localises to the cytoplasm. It carries out the reaction tRNA(Asn) + L-asparagine + ATP = L-asparaginyl-tRNA(Asn) + AMP + diphosphate + H(+). In Geobacter metallireducens (strain ATCC 53774 / DSM 7210 / GS-15), this protein is Asparagine--tRNA ligase.